Consider the following 180-residue polypeptide: Small ribosomal subunit protein uS4 (180 aa).

In terms of domain architecture, S4 RNA-binding spans 103 to 174 (RRLQTLVFKK…HPERMVIEEV (72 aa)).

The protein belongs to the universal ribosomal protein uS4 family. Part of the 30S ribosomal subunit. Contacts protein S5. The interaction surface between S4 and S5 is involved in control of translational fidelity.

One of the primary rRNA binding proteins, it binds directly to 16S rRNA where it nucleates assembly of the body of the 30S subunit. In terms of biological role, with S5 and S12 plays an important role in translational accuracy. This is Small ribosomal subunit protein uS4 from Thermococcus sibiricus (strain DSM 12597 / MM 739).